Consider the following 414-residue polypeptide: Nucleoredoxin (414 aa).

The Thioredoxin domain maps to 131–305; the sequence is LLVKDDPEGL…ELNAVQLNEG (175 aa).

This sequence belongs to the nucleoredoxin family.

It is found in the cytoplasm. The protein localises to the cytosol. It localises to the nucleus. It catalyses the reaction [protein]-dithiol + NAD(+) = [protein]-disulfide + NADH + H(+). The catalysed reaction is [protein]-dithiol + NADP(+) = [protein]-disulfide + NADPH + H(+). Functions as a redox-dependent negative regulator of the Wnt signaling pathway. The protein is Nucleoredoxin (nxn) of Xenopus laevis (African clawed frog).